We begin with the raw amino-acid sequence, 484 residues long: Glutamyl-tRNA(Gln) amidotransferase subunit A (484 aa).

Catalysis depends on charge relay system residues lysine 76 and serine 151. The active-site Acyl-ester intermediate is serine 175.

This sequence belongs to the amidase family. GatA subfamily. Heterotrimer of A, B and C subunits.

It carries out the reaction L-glutamyl-tRNA(Gln) + L-glutamine + ATP + H2O = L-glutaminyl-tRNA(Gln) + L-glutamate + ADP + phosphate + H(+). In terms of biological role, allows the formation of correctly charged Gln-tRNA(Gln) through the transamidation of misacylated Glu-tRNA(Gln) in organisms which lack glutaminyl-tRNA synthetase. The reaction takes place in the presence of glutamine and ATP through an activated gamma-phospho-Glu-tRNA(Gln). In Halorhodospira halophila (strain DSM 244 / SL1) (Ectothiorhodospira halophila (strain DSM 244 / SL1)), this protein is Glutamyl-tRNA(Gln) amidotransferase subunit A.